A 202-amino-acid chain; its full sequence is Nigerythrin (202 aa).

The region spanning 23 to 168 (KTAVGSTLEN…AYNDIDAPDD (146 aa)) is the Ferritin-like diiron domain. 10 residues coordinate Fe cation: Glu40, Glu73, Glu115, Glu118, Glu149, His152, Cys174, Cys177, Cys189, and Cys192. The Rubredoxin-like domain occupies 169 to 202 (DKFHLCPICGYIHKGEDFEKCPICFRPKDTFTAY).

Homodimer. May possess two rubredoxin-like centers and two hemerythrin-like binuclear-iron centers per dimer.

It localises to the cytoplasm. Exhibits NADH peroxidase activity (in vitro). The sequence is that of Nigerythrin (ngr) from Nitratidesulfovibrio vulgaris (strain ATCC 29579 / DSM 644 / CCUG 34227 / NCIMB 8303 / VKM B-1760 / Hildenborough) (Desulfovibrio vulgaris).